A 299-amino-acid polypeptide reads, in one-letter code: Sodium/potassium-transporting ATPase subunit beta-2 (299 aa).

Residues 1–36 (MAALTQKKTCSQMMEEWKEFMWNPRTREFMGRTGSS) lie on the Cytoplasmic side of the membrane. A helical; Signal-anchor for type II membrane protein transmembrane segment spans residues 37–57 (WALILLFYVVFYAFLTAVFSL). Topologically, residues 58 to 299 (SLWVMLQTID…VIFTMKIDRL (242 aa)) are extracellular. Residues Asn-101 and Asn-119 are each glycosylated (N-linked (GlcNAc...) asparagine). Intrachain disulfides connect Cys-130/Cys-152 and Cys-162/Cys-178. N-linked (GlcNAc...) asparagine glycans are attached at residues Asn-199, Asn-226, Asn-247, and Asn-259. A disulfide bond links Cys-206 and Cys-270.

Belongs to the X(+)/potassium ATPases subunit beta family. As to quaternary structure, the sodium/potassium-transporting ATPase is composed of a catalytic alpha subunit, an auxiliary non-catalytic beta subunit and an additional regulatory subunit. As to expression, expressed at a high level in bladder epithelial cells and eye and at a trace level in kidney; it is not detectable in significant amounts in the stomach, colon and small intestine.

It localises to the cell membrane. Its function is as follows. This is the non-catalytic component of the active enzyme, which catalyzes the hydrolysis of ATP coupled with the exchange of Na(+) and K(+) ions across the plasma membrane. The exact function of this glycoprotein is not known. Some specific sequence of the beta subunit can modulate the activation of the Na,K-pump by extracellular potassium ions. In Rhinella marina (Cane toad), this protein is Sodium/potassium-transporting ATPase subunit beta-2.